Consider the following 166-residue polypeptide: Small ribosomal subunit protein uS9 (166 aa).

The tract at residues 135 to 166 is disordered; it reads KKAGFLTRDPRATERKKYGLKKARKAPQYSKR. Positions 142 to 151 are enriched in basic and acidic residues; the sequence is RDPRATERKK. The span at 152-166 shows a compositional bias: basic residues; it reads YGLKKARKAPQYSKR.

Belongs to the universal ribosomal protein uS9 family.

This is Small ribosomal subunit protein uS9 from Mycolicibacterium paratuberculosis (strain ATCC BAA-968 / K-10) (Mycobacterium paratuberculosis).